The following is a 1444-amino-acid chain: Bromodomain-containing protein 4 (1444 aa).

7 disordered regions span residues 1–44 (MGDG…PKRQ), 154–217 (VEIS…PQPI), 279–362 (AAPP…KQQE), 492–523 (PVMA…ERAQ), 540–645 (AALS…GGAA), 722–986 (CLRK…SSQP), and 1020–1422 (TSLM…RREA). Residues 11–27 (SGSSSSQGQPSSQAPSS) show a composition bias toward low complexity. In terms of domain architecture, Bromo 1 spans 43 to 149 (RQTNQLQYLL…KVFLTKISEM (107 aa)). Over residues 186 to 196 (ASPQTRGLSNL) the composition is skewed to polar residues. A compositionally biased stretch (pro residues) spans 206–216 (PQGPPTLPPQP). Over residues 303–319 (TTTPTANDQLNESSPAE) the composition is skewed to polar residues. Over residues 327–347 (PRRDNTRPSKLPKKEAPDSQH) the composition is skewed to basic and acidic residues. The region spanning 358–467 (PKQQEQLRYC…DVFEMRFAKM (110 aa)) is the Bromo 2 domain. Positions 498–511 (SSSDTSSDSSSESE) are enriched in low complexity. The segment at 498–517 (SSSDTSSDSSSESESSTDDS) is NPS region. Positions 538–610 (QLAALSQPQA…SKKLSKKEGG (73 aa)) are BID region. Residues 549-569 (KPKKKEKEKKEKKKDKHKKKA) are compositionally biased toward basic residues. One can recognise an NET domain in the interval 633–730 (DTEEDLGLTG…SCLRKKKKPA (98 aa)). Composition is skewed to low complexity over residues 746-760 (GTSS…SSSS), 800-823 (LQPQ…HPSP), 919-954 (LQQS…QQQH), and 1036-1046 (PSLLQSVQVQS). A compositionally biased stretch (polar residues) spans 1090–1109 (PLQTAQTQPGQHKVSMPSTK). Residues 1110-1121 (AQQIIQQQQATQ) are compositionally biased toward low complexity. Residues 1126–1444 (RQHKADSYNS…LMAIFEENLF (319 aa)) are C-terminal (CTD) region. Positions 1151 to 1163 (QIPQYSLVHQSPS) are enriched in polar residues. The span at 1246–1255 (QDKEKFKQEP) shows a compositional bias: basic and acidic residues. Residues 1282–1296 (SSTTPSSGLKSSSDS) show a composition bias toward low complexity. Positions 1298-1357 (EQFRRAAREKEEREKALKAQVEQAEKDRLRKEQEKLRGRDEEDSIEPPRRPLEEPRRRQE) are enriched in basic and acidic residues. Positions 1367–1389 (QHQTQAQAQTLNPAQSPSASQPT) are enriched in low complexity. Positions 1405–1422 (QQREMARRREQERRRREA) are enriched in basic and acidic residues.

The protein belongs to the BET family. Widely expressed.

The protein localises to the nucleus. It is found in the chromosome. Chromatin reader protein that recognizes and binds acetylated histones and plays a key role in transmission of epigenetic memory across cell divisions and transcription regulation. Remains associated with acetylated chromatin throughout the entire cell cycle and provides epigenetic memory for postmitotic G1 gene transcription by preserving acetylated chromatin status and maintaining high-order chromatin structure. During interphase, plays a key role in regulating the transcription of signal-inducible genes by associating with the P-TEFb complex and recruiting it to promoters. The protein is Bromodomain-containing protein 4 (brd4) of Danio rerio (Zebrafish).